The following is a 103-amino-acid chain: Truncated secreted TNF-receptor-like protein A53R (103 aa).

The TNFR-Cys 1 repeat unit spans residues 36-73; it reads SCDKGEYLDKRHNQCCNRCPPGEFAKVRCNGNDNTKCE. 3 cysteine pairs are disulfide-bonded: cysteine 37-cysteine 50, cysteine 51-cysteine 64, and cysteine 54-cysteine 72. One copy of the TNFR-Cys 2; truncated repeat lies at 74–103; the sequence is RCPPHTYTTIPIILMDVINVENAQPDHLIR.

It belongs to the poxviridae A53R protein family.

The protein is Truncated secreted TNF-receptor-like protein A53R of Vaccinia virus (strain Western Reserve) (VACV).